A 471-amino-acid chain; its full sequence is Putative pentatricopeptide repeat-containing protein At1g53330 (471 aa).

PPR repeat units lie at residues 46-81, 82-116, 117-147, 151-185, 186-221, 222-256, 257-291, 292-326, 327-361, and 362-396; these read SLLC…RIVP, TEII…RCQR, TVKS…IDEF, DACT…KVKP, TGVT…GVRP, TVHI…KIKV, DAAI…GCKP, DTVT…GLKP, DVIS…GCSP, and DTLS…GYKP.

The protein belongs to the PPR family. P subfamily.

Functionally, involved during embryo development. The protein is Putative pentatricopeptide repeat-containing protein At1g53330 of Arabidopsis thaliana (Mouse-ear cress).